We begin with the raw amino-acid sequence, 396 residues long: MNFNKKTIEDIQVKGKKVLVRCDFNVPLKDGVITDENRLNGALPTIKYLVENGAKVILCSHMGKPKGEPKPELSLAPVAKRLSELLGKEIKFAPDNTVVGENAKAAVAEMKDGDVVLLENTRYRKEETKNGEEFSKELASLAEIFVNDAFGTAHRAHCSTVGVTDYIDTAVCGYLIQKELKFLGNAVETPEKPFVAILGGAKVSDKIAVINNLLDKVDTIIIGGGMAYTFLKAQGYEIGTSLVEEDRLDYAKEMIAKAEEKGVNFLLPVDHRVAAEFKDVEATVTEDQNIPAGTMGLDIGPKTEKLYADAVKDAKTVIWNGPMGVFEFENFNKGTIAVAKAMADSNATTIIGGGDSAAAVNILGFGDKMTHISTGGGASLEFLEGKVLPGISALND.

Residues 23-25 (DFN), arginine 38, 61-64 (HMGK), arginine 122, and arginine 155 contribute to the substrate site. ATP is bound by residues lysine 206, glycine 296, glutamate 327, and 353 to 356 (GGDS).

It belongs to the phosphoglycerate kinase family. As to quaternary structure, monomer.

The protein resides in the cytoplasm. It catalyses the reaction (2R)-3-phosphoglycerate + ATP = (2R)-3-phospho-glyceroyl phosphate + ADP. It participates in carbohydrate degradation; glycolysis; pyruvate from D-glyceraldehyde 3-phosphate: step 2/5. In Clostridium botulinum (strain Alaska E43 / Type E3), this protein is Phosphoglycerate kinase.